The sequence spans 136 residues: Transcription antitermination protein NusB (136 aa).

This sequence belongs to the NusB family.

In terms of biological role, involved in transcription antitermination. Required for transcription of ribosomal RNA (rRNA) genes. Binds specifically to the boxA antiterminator sequence of the ribosomal RNA (rrn) operons. The sequence is that of Transcription antitermination protein NusB from Pseudarthrobacter chlorophenolicus (strain ATCC 700700 / DSM 12829 / CIP 107037 / JCM 12360 / KCTC 9906 / NCIMB 13794 / A6) (Arthrobacter chlorophenolicus).